A 271-amino-acid chain; its full sequence is Formamidopyrimidine-DNA glycosylase (271 aa).

Residue Pro-2 is the Schiff-base intermediate with DNA of the active site. Glu-3 acts as the Proton donor in catalysis. The active-site Proton donor; for beta-elimination activity is the Lys-57. Positions 90, 109, and 151 each coordinate DNA. The FPG-type zinc-finger motif lies at 236–270 (HVYGRGGETCTSCGNLLSEIRLGQRTTVFCGICQT). Arg-260 functions as the Proton donor; for delta-elimination activity in the catalytic mechanism.

This sequence belongs to the FPG family. As to quaternary structure, monomer. Zn(2+) serves as cofactor.

The catalysed reaction is Hydrolysis of DNA containing ring-opened 7-methylguanine residues, releasing 2,6-diamino-4-hydroxy-5-(N-methyl)formamidopyrimidine.. It catalyses the reaction 2'-deoxyribonucleotide-(2'-deoxyribose 5'-phosphate)-2'-deoxyribonucleotide-DNA = a 3'-end 2'-deoxyribonucleotide-(2,3-dehydro-2,3-deoxyribose 5'-phosphate)-DNA + a 5'-end 5'-phospho-2'-deoxyribonucleoside-DNA + H(+). In terms of biological role, involved in base excision repair of DNA damaged by oxidation or by mutagenic agents. Acts as a DNA glycosylase that recognizes and removes damaged bases. Has a preference for oxidized purines, such as 7,8-dihydro-8-oxoguanine (8-oxoG). Has AP (apurinic/apyrimidinic) lyase activity and introduces nicks in the DNA strand. Cleaves the DNA backbone by beta-delta elimination to generate a single-strand break at the site of the removed base with both 3'- and 5'-phosphates. The chain is Formamidopyrimidine-DNA glycosylase from Shewanella baltica (strain OS155 / ATCC BAA-1091).